The sequence spans 321 residues: Auxin-responsive protein IAA8 (321 aa).

Positions 54-58 match the EAR-like (transcriptional repression) motif; sequence LRLGL. The PB1 domain occupies 199-301; sequence VLFVKVSMDG…TCQKLKIMKG (103 aa).

It belongs to the Aux/IAA family. In terms of assembly, homodimers and heterodimers. Interacts with TPL. As to expression, highly expressed in the whole plant.

The protein resides in the nucleus. Aux/IAA proteins are short-lived transcriptional factors that function as repressors of early auxin response genes at low auxin concentrations. Repression is thought to result from the interaction with auxin response factors (ARFs), proteins that bind to the auxin-responsive promoter element (AuxRE). Formation of heterodimers with ARF proteins may alter their ability to modulate early auxin response genes expression. The chain is Auxin-responsive protein IAA8 (IAA8) from Arabidopsis thaliana (Mouse-ear cress).